A 271-amino-acid chain; its full sequence is Eukaryotic translation initiation factor 3 subunit G (271 aa).

Disordered stretches follow at residues 1-29 (MPAL…SEVI) and 143-185 (KPTK…MRGR). An RRM domain is found at 189–267 (SAIRISNLSE…LILSVEWSKP (79 aa)).

The protein belongs to the eIF-3 subunit G family. Component of the eukaryotic translation initiation factor 3 (eIF-3) complex.

It is found in the cytoplasm. Its function is as follows. RNA-binding component of the eukaryotic translation initiation factor 3 (eIF-3) complex, which is involved in protein synthesis of a specialized repertoire of mRNAs and, together with other initiation factors, stimulates binding of mRNA and methionyl-tRNAi to the 40S ribosome. The eIF-3 complex specifically targets and initiates translation of a subset of mRNAs involved in cell proliferation. This subunit can bind 18S rRNA. This chain is Eukaryotic translation initiation factor 3 subunit G, found in Anopheles gambiae (African malaria mosquito).